A 222-amino-acid polypeptide reads, in one-letter code: dTTP/UTP pyrophosphatase (222 aa).

Catalysis depends on Asp-83, which acts as the Proton acceptor.

It belongs to the Maf family. YhdE subfamily. A divalent metal cation is required as a cofactor.

It localises to the cytoplasm. The enzyme catalyses dTTP + H2O = dTMP + diphosphate + H(+). It carries out the reaction UTP + H2O = UMP + diphosphate + H(+). In terms of biological role, nucleoside triphosphate pyrophosphatase that hydrolyzes dTTP and UTP. May have a dual role in cell division arrest and in preventing the incorporation of modified nucleotides into cellular nucleic acids. This Desulfitobacterium hafniense (strain Y51) protein is dTTP/UTP pyrophosphatase.